The following is a 378-amino-acid chain: MKILVDENMPYARELFSRLGDVQAVPGRPLPRDLLAGADALMVRSVTKVNADLLSGSAVKFVGSATAGTDHVDDTWLNANGIAFSAAPGCNAIAVVEYVFSSLLMLAERDGFQLRDKTVGIVGVGNVGRRLDARLKAWGVKTLLCDPPRADRGDAGDFLPLETLVRDADILTLHTPLYLDGPYRTHHLVDASVLDAFADGRILINACRGPVVDNAALLEALQRGKKLSVILDVWEPEPELSTDLLARVDIGTAHIAGYTLEGKARGTTQVFEAWSEFIGTPQQVALSSLLPEPEYAEVTLTVPLDEALLKRLVHLVYDVRRDDALLRHVAHQEGEFDRLRKHYQERREWSSLHVICADADSADCLNALGFTASVRGAR.

Positions 45 and 66 each coordinate substrate. Residues D146 and T175 each contribute to the NAD(+) site. The active site involves R208. Position 232 (D232) interacts with NAD(+). E237 is an active-site residue. H254 (proton donor) is an active-site residue. G257 provides a ligand contact to NAD(+). Residue Y258 participates in substrate binding.

Belongs to the D-isomer specific 2-hydroxyacid dehydrogenase family. PdxB subfamily. As to quaternary structure, homodimer.

It localises to the cytoplasm. The catalysed reaction is 4-phospho-D-erythronate + NAD(+) = (R)-3-hydroxy-2-oxo-4-phosphooxybutanoate + NADH + H(+). Its pathway is cofactor biosynthesis; pyridoxine 5'-phosphate biosynthesis; pyridoxine 5'-phosphate from D-erythrose 4-phosphate: step 2/5. In terms of biological role, catalyzes the oxidation of erythronate-4-phosphate to 3-hydroxy-2-oxo-4-phosphonooxybutanoate. This Pectobacterium carotovorum subsp. carotovorum (strain PC1) protein is Erythronate-4-phosphate dehydrogenase.